Reading from the N-terminus, the 181-residue chain is Probable nicotinate-nucleotide adenylyltransferase (181 aa).

This sequence belongs to the NadD family.

It carries out the reaction nicotinate beta-D-ribonucleotide + ATP + H(+) = deamido-NAD(+) + diphosphate. It participates in cofactor biosynthesis; NAD(+) biosynthesis; deamido-NAD(+) from nicotinate D-ribonucleotide: step 1/1. Catalyzes the reversible adenylation of nicotinate mononucleotide (NaMN) to nicotinic acid adenine dinucleotide (NaAD). The polypeptide is Probable nicotinate-nucleotide adenylyltransferase (Campylobacter fetus subsp. fetus (strain 82-40)).